A 63-amino-acid chain; its full sequence is Chromatin protein Cren7 (63 aa).

It belongs to the Cren7 family. In terms of assembly, monomer. Post-translationally, methylated at multiple sites, to varying extents.

It is found in the chromosome. It localises to the cytoplasm. Its function is as follows. A chromatin protein, binds double-stranded DNA without sequence specificity. Constrains negative DNA supercoils. In Pyrobaculum calidifontis (strain DSM 21063 / JCM 11548 / VA1), this protein is Chromatin protein Cren7.